Reading from the N-terminus, the 661-residue chain is Peroxisomal acyl-coenzyme A oxidase 1 (661 aa).

A Phosphoserine modification is found at serine 26. Residue lysine 65 is modified to N6-acetyllysine. An N6-succinyllysine mark is found at lysine 89 and lysine 90. An FAD-binding site is contributed by threonine 139. Lysine 159 is modified (N6-succinyllysine). Glycine 178 contributes to the FAD binding site. Position 216 is an N6-acetyllysine (lysine 216). Position 241 is an N6-succinyllysine (lysine 241). N6-acetyllysine occurs at positions 255, 267, and 272. Residue lysine 349 is modified to N6-succinyllysine. The active-site Proton acceptor is the glutamate 421. 2 positions are modified to N6-acetyllysine; alternate: lysine 437 and lysine 446. An N6-succinyllysine; alternate mark is found at lysine 437 and lysine 446. Lysine 500 is subject to N6-acetyllysine. Lysine 512 carries the post-translational modification N6-acetyllysine; alternate. Position 512 is an N6-succinyllysine; alternate (lysine 512). Position 542 is an N6-succinyllysine (lysine 542). At lysine 637 the chain carries N6-acetyllysine; alternate. The residue at position 637 (lysine 637) is an N6-succinyllysine; alternate. Lysine 643 bears the N6-succinyllysine mark. Serine 649 carries the post-translational modification Phosphoserine. At lysine 652 the chain carries N6-acetyllysine. N6-succinyllysine is present on lysine 655. Residues 659–661 (SKL) carry the Microbody targeting signal motif.

Belongs to the acyl-CoA oxidase family. As to quaternary structure, homodimer. Interacts with LONP2. Requires FAD as cofactor. Highest levels of isoform 1 are found in liver and kidney while highest levels of isoform 2 are found in white adipose tissue. Isoform 1 is expressed at higher levels than isoform 2 in liver and kidney while isoform 2 is expressed at higher levels in brain, heart, lung, muscle, white adipose tissue and testis.

The protein localises to the peroxisome. It catalyses the reaction a 2,3-saturated acyl-CoA + O2 = a (2E)-enoyl-CoA + H2O2. The catalysed reaction is hexadecanoyl-CoA + O2 = (2E)-hexadecenoyl-CoA + H2O2. It carries out the reaction dodecanoyl-CoA + O2 = (2E)-dodecenoyl-CoA + H2O2. The enzyme catalyses octanoyl-CoA + O2 = (2E)-octenoyl-CoA + H2O2. It catalyses the reaction decanoyl-CoA + O2 = (2E)-decenoyl-CoA + H2O2. The catalysed reaction is tetradecanoyl-CoA + O2 = (2E)-tetradecenoyl-CoA + H2O2. It carries out the reaction hexadecanedioyl-CoA + O2 = (2E)-hexadecenedioyl-CoA + H2O2. The enzyme catalyses tetracosanoyl-CoA + O2 = (2E)-tetracosenoyl-CoA + H2O2. It catalyses the reaction glutaryl-CoA + O2 = (2E)-glutaconyl-CoA + H2O2. The catalysed reaction is hexanoyl-CoA + O2 = (2E)-hexenoyl-CoA + H2O2. It carries out the reaction octadecanoyl-CoA + O2 = (2E)-octadecenoyl-CoA + H2O2. The enzyme catalyses (5Z,8Z,11Z,14Z,17Z)-eicosapentaenoyl-CoA + O2 = (2E,5Z,8Z,11Z,14Z,17Z)-icosahexaenoyl-CoA + H2O2. It catalyses the reaction (6Z,9Z,12Z,15Z,18Z,21Z)-tetracosahexaenoyl-CoA + O2 = (2E,6Z,9Z,12Z,15Z,18Z,21Z)-tetracosaheptaenoyl-CoA + H2O2. Its pathway is lipid metabolism; peroxisomal fatty acid beta-oxidation. Functionally, involved in the initial and rate-limiting step of peroxisomal beta-oxidation of straight-chain saturated and unsaturated very-long-chain fatty acids. Catalyzes the desaturation of fatty acyl-CoAs such as palmitoyl-CoA (hexadecanoyl-CoA) to 2-trans-enoyl-CoAs ((2E)-enoyl-CoAs) such as (2E)-hexadecenoyl-CoA, and donates electrons directly to molecular oxygen (O(2)), thereby producing hydrogen peroxide (H(2)O(2)). In terms of biological role, shows highest activity against medium-chain fatty acyl-CoAs. Shows optimum activity with a chain length of 10 carbons (decanoyl-CoA) in vitro. Is active against a much broader range of substrates and shows activity towards long-chain acyl-CoAs. This is Peroxisomal acyl-coenzyme A oxidase 1 from Mus musculus (Mouse).